Consider the following 370-residue polypeptide: MKVTGITILFWPLSMILLSDKIQSSKREVQCNFTEKNYTLIPADIKKDVTILDLSYNQITLNGTDTRVLQTYFLLTELYLIENKVTILHNNGFGNLSSLEILNICRNSIYVIQQGAFLGLNKLKQLYLCQNKIEQLNADVFVPLRSLKLLNLQGNLISYLDVPPLFHLELITLYGNLWNCSCSLFNLQNWLNTSNVTLENENITMCSYPNSLQSYNIKTVPHKAECHSKFPSSVTEDLYIHFQPISNSIFNSSSNNLTRNSEHEPLGKSWAFLVGVVVTVLTTSLLIFIAIKCPIWYNILLSYNHHRLEEHEAETYEDGFTGNPSSLSQIPETNSEETTVIFEQLHSFVVDDDGFIEDKYIDIHELCEEN.

Residues 1–24 (MKVTGITILFWPLSMILLSDKIQS) form the signal peptide. Over 25–270 (SKREVQCNFT…SEHEPLGKSW (246 aa)) the chain is Extracellular. N-linked (GlcNAc...) asparagine glycans are attached at residues Asn32, Asn37, Asn62, and Asn95. LRR repeat units follow at residues 46–71 (KKDV…VLQT), 72–95 (YFLL…GFGN), 96–119 (LSSL…AFLG), 120–143 (LNKL…VFVP), and 145–168 (RSLK…LFHL). The region spanning 176–227 (NLWNCSCSLFNLQNWLNTSNVTLENENITMCSYPNSLQSYNIKTVPHKAECH) is the LRRCT domain. Asn179, Asn192, Asn195, Asn202, Asn251, and Asn256 each carry an N-linked (GlcNAc...) asparagine glycan. A helical transmembrane segment spans residues 271-291 (AFLVGVVVTVLTTSLLIFIAI). Residues 292–370 (KCPIWYNILL…IDIHELCEEN (79 aa)) are Cytoplasmic-facing.

In terms of assembly, interacts with TRAF2 and TRAF6. As to expression, expressed in renal collecting duct epithelial cells.

The protein resides in the membrane. Its activity is regulated as follows. Activated by TLR ligands such as LPS, bacterial DNA and peptidoglycan. Its function is as follows. Pathogen-recognition receptor which mediates the activation of TRAF2- and TRAF6 NF-kappa-B signaling pathways and induces the expression of pro-inflammatory cytokines. In kidney, prevents infection by uropathogenic bacteria by inducing the production of cytokines, chemokines and antimicrobial substances. In gut, involved in host-microbiota interactions, plays a critical role in promoting the recruitment of immune cells and intestinal inflammation. The protein is Leucine-rich repeat-containing protein 19 of Homo sapiens (Human).